The primary structure comprises 424 residues: Arogenate dehydratase 4, chloroplastic (424 aa).

The N-terminal 34 residues, 1-34 (MQAATSCDLKFRSTDPTSRNKCFSHAIPKRVAVT), are a transit peptide targeting the chloroplast. A Prephenate dehydratase domain is found at 126-303 (RVAYQGVPGA…NVTRFLMLAR (178 aa)). The ACT domain occupies 319 to 410 (VFAAQEHKGT…SFLRVLGSYP (92 aa)).

In terms of tissue distribution, expressed in roots, leaves, stems, flowers and siliques. More abundant in stems and roots.

It localises to the plastid. The protein localises to the chloroplast stroma. The enzyme catalyses L-arogenate + H(+) = L-phenylalanine + CO2 + H2O. It participates in amino-acid biosynthesis; L-phenylalanine biosynthesis; L-phenylalanine from L-arogenate: step 1/1. Functionally, converts the prephenate produced from the shikimate-chorismate pathway into phenylalanine. The chain is Arogenate dehydratase 4, chloroplastic from Arabidopsis thaliana (Mouse-ear cress).